A 375-amino-acid chain; its full sequence is Lipid-A-disaccharide synthase (375 aa).

The protein belongs to the LpxB family.

It carries out the reaction a lipid X + a UDP-2-N,3-O-bis[(3R)-3-hydroxyacyl]-alpha-D-glucosamine = a lipid A disaccharide + UDP + H(+). It functions in the pathway bacterial outer membrane biogenesis; LPS lipid A biosynthesis. In terms of biological role, condensation of UDP-2,3-diacylglucosamine and 2,3-diacylglucosamine-1-phosphate to form lipid A disaccharide, a precursor of lipid A, a phosphorylated glycolipid that anchors the lipopolysaccharide to the outer membrane of the cell. This chain is Lipid-A-disaccharide synthase, found in Pseudomonas putida (strain ATCC 700007 / DSM 6899 / JCM 31910 / BCRC 17059 / LMG 24140 / F1).